We begin with the raw amino-acid sequence, 249 residues long: Aquaporin TIP2-1 (249 aa).

2 helical membrane-spanning segments follow: residues 20 to 40 and 54 to 74; these read AYVAEFIATLLFVFAGVGSAI and AGLVAIAIAHALALFVGVSVA. Positions 83–85 match the NPA 1 motif; it reads NPA. 3 consecutive transmembrane segments (helical) span residues 102–122, 141–161, and 168–188; these read VFYWVAQLLGATVACLLLGFV, GVVFEVVITFALVYTVYATAA, and LGTIAPIAIGFIVGANILAAG. The short motif at 196-198 is the NPA 2 element; that stretch reads NPA. A helical membrane pass occupies residues 217-237; sequence WVGPLVGGGLAGLVYGDVFIG.

This sequence belongs to the MIP/aquaporin (TC 1.A.8) family. TIP (TC 1.A.8.10) subfamily.

The protein resides in the vacuole membrane. Functionally, aquaporins facilitate the transport of water and small neutral solutes across cell membranes. The polypeptide is Aquaporin TIP2-1 (TIP2-1) (Zea mays (Maize)).